We begin with the raw amino-acid sequence, 105 residues long: Large ribosomal subunit protein uL24 (105 aa).

This sequence belongs to the universal ribosomal protein uL24 family. In terms of assembly, part of the 50S ribosomal subunit.

Its function is as follows. One of two assembly initiator proteins, it binds directly to the 5'-end of the 23S rRNA, where it nucleates assembly of the 50S subunit. Functionally, one of the proteins that surrounds the polypeptide exit tunnel on the outside of the subunit. This Rhodospirillum centenum (strain ATCC 51521 / SW) protein is Large ribosomal subunit protein uL24.